The following is a 759-amino-acid chain: MANSSLSQVLLMWKPGKIQKGPCSAEQQTLTSRLLRDTETCRRNFRNFPYPDVAGPRKALCQLRELCLKWLRPEVHSKEQILELLVLEQFLSILPGEVRTWVNSQYPESSEEVVALVEDLTQILEEEEAPQSSALPQDTPEDDPNHDPNPASQAGWLSDVVTKDLVTFNDVAVDITQEDWELMPPVQKELYKTVTLQNYWNMVSLGLTVYRPTVIPVLEEPWMVIKEIVEGPNPEWEPKAQAQCPAKHLPELKQDGTQTVKLEDSYDDDNDDSVESPPVCAFGMIHIDEEGFSVKSELSQEDPTEEYLSKCDIYRVTFEKHTNLGVQFDTQSDDKTALYNESKPPFSNASSGGAVRGKILPGDKPYSCNVCGKQFRKYPSLLAHRENHAKEKAYECEECGKEFKHLSSLIAHQRMHTGEKPYECHQCGKAFSQRAHLTIHQRIHTGEKPYKCEDCGKDFSQRAHLTIHQRTHTGEKPYKCLECSKTFSHSSSLINHQRVHTGEKPYICNECGKTFSQSTHLLQHQKIHTGKKPYKCNECWKVFSQSTYLIRHQRIHSGEKCYKCTACGKAFAHSSTLIQHQTTHTGEKSYICNVCGKAFSQSANLTQHHRTHTGEKPYKCSVCGKAFSQSVHLTQHQRIHNGEKPFKCNTCGKAYRQGANLTQHQRVHTGEKPYKCHHCGKAFIYSSSLNQHRRTHTGERPYKCSHCNKDFSQRTCLIQHQRIHTGEKPYGCRICGKAFTQSTNLIQHQRVHTGARHRN.

Positions 42–124 (RRNFRNFPYP…ALVEDLTQIL (83 aa)) constitute an SCAN box domain. The tract at residues 127 to 154 (EEAPQSSALPQDTPEDDPNHDPNPASQA) is disordered. In terms of domain architecture, KRAB spans 166-234 (VTFNDVAVDI…IKEIVEGPNP (69 aa)). 14 consecutive C2H2-type zinc fingers follow at residues 366 to 388 (YSCN…RENH), 394 to 416 (YECE…QRMH), 422 to 444 (YECH…QRIH), 450 to 472 (YKCE…QRTH), 478 to 500 (YKCL…QRVH), 506 to 528 (YICN…QKIH), 534 to 556 (YKCN…QRIH), 562 to 584 (YKCT…QTTH), 590 to 612 (YICN…HRTH), 618 to 640 (YKCS…QRIH), 646 to 668 (FKCN…QRVH), 674 to 696 (YKCH…RRTH), 702 to 724 (YKCS…QRIH), and 730 to 752 (YGCR…QRVH).

Belongs to the krueppel C2H2-type zinc-finger protein family. In terms of tissue distribution, expressed in brain and at low levels in kidney and spleen and few hematopoietic cell lines.

It is found in the nucleus. In terms of biological role, may be involved in transcriptional regulation. This Mus musculus (Mouse) protein is Zinc finger protein 287.